A 222-amino-acid polypeptide reads, in one-letter code: Endonuclease V (222 aa).

The Mg(2+) site is built by D43 and D109.

Belongs to the endonuclease V family. The cofactor is Mg(2+).

It is found in the cytoplasm. The catalysed reaction is Endonucleolytic cleavage at apurinic or apyrimidinic sites to products with a 5'-phosphate.. In terms of biological role, DNA repair enzyme involved in the repair of deaminated bases. Selectively cleaves double-stranded DNA at the second phosphodiester bond 3' to a deoxyinosine leaving behind the intact lesion on the nicked DNA. The protein is Endonuclease V of Roseiflexus castenholzii (strain DSM 13941 / HLO8).